Here is a 369-residue protein sequence, read N- to C-terminus: MQTSNYGSLPTSRSAVVLGNDERLRIERHLPLPALRPNEVLVQVKAVAINPCDYKMHQRFPCPGAVDGCDFAGVIVGVGPEVLKFGLGDRVCGAVHGSNPLRPESGSFTDYMTSESEFTLKIPAGLSFEQAVGMGVTGIGTLGMALFRTLQLPGSLDRPATKPRTVLVHGGSSSVGTMAIQLLRLLGHVPIATCSPKNFALARRFGAEEVFDYNSPDCAAAIKAYTKNTLSYILDPFTDAKSVDLCYKAMGRAGGRYCCLEMYPEYVLQRKSIKVGFVMGPLLLGHRLALSQGYERDEDPEMRAFGVEWYKDVQKMLDRGLLKRHPIKLLGDSFEALIEGVEMLQRKEVSGEKLVVALDSEQSKPVLTK.

52–55 provides a ligand contact to NADP(+); the sequence is CDYK. 137–144 is a substrate binding site; it reads TGIGTLGM. Residues 195–198, tyrosine 213, and 260–261 each bind NADP(+); these read SPKN and LE. 280–284 lines the substrate pocket; the sequence is GPLLL. NADP(+) is bound at residue 349-350; the sequence is VS.

This sequence belongs to the zinc-containing alcohol dehydrogenase family. Monomer.

The protein operates within mycotoxin biosynthesis. Functionally, trans-enoyl reductase; part of the gene cluster that mediates the biosynthesis of the mycotoxin pyrichalasin H, a tyrosine-derived cytochalasan that inhibits the growth of rice seedlings, but also inhibits lymphocyte capping and actin polymerization and alters cell morphology. Pyrichalasin H is indicated as the responsible agent for the genus-specific pathogenicity of M.grisea toward crabgrass. The first step in the pathway is catalyzed by the O-methyltransferase pyiA which methylates free tyrosine to generate the precursor O-methyltyrosine. The hybrid PKS-NRPS pyiS, assisted by the enoyl reductase pyiC, are responsible for fusion of the O-methyltyrosine precursor and the polyketide backbone. The polyketide synthase module (PKS) of pyiS is responsible for the synthesis of the polyketide backbone and the downstream nonribosomal peptide synthetase (NRPS) amidates the carboxyl end of the polyketide with the O-methyltyrosine precursor. As the NRPS A-domain demonstrates substrate tolerance, pyiS can also use phenylalanine, tyrosine and even para-chlorophenylalanine as amino acid precursor, which leads to the production of novel cytochalasans, including halogenated cytochalasans. Because pyiS lacks a designated enoylreductase (ER) domain, the required activity is provided the enoyl reductase pyiC. Reduction by the hydrolyase pyiE, followed by dehydration and intra-molecular Diels-Alder cyclization by the Diels-Alderase pyiF then yield the required isoindolone-fused macrocycle. The tailoring cytochrome P450 monooxygenases piyD and piyG catalyze the hydroxylation at C-18 and C-7, respectivily, whereas the short-chain dehydrogenase/reductase pyiH reduces the carbonyl at C-21 in preparation for the transfer of an acetyl group by the acetyltransferase pyiB. These 3 reactions whose order is not clear yet, lead to the production of O-methylpyrichalasin J, a deacetylated pyrichalasin H. Finally, pyiB to converts O-methylpyrichalasin J into the final product pyrichalasin H via acetylation of C-21. The sequence is that of Trans-enoyl reductase pyiC from Pyricularia grisea (Crabgrass-specific blast fungus).